Consider the following 286-residue polypeptide: Octanoyltransferase (286 aa).

The BPL/LPL catalytic domain maps to 50–278 (LRTPDELWIV…NIAQRHAGVI (229 aa)). Substrate is bound by residues 89–96 (RGGQVTWH), 190–192 (SLG), and 203–205 (GVA). Cys-221 acts as the Acyl-thioester intermediate in catalysis.

The protein belongs to the LipB family.

It is found in the cytoplasm. It catalyses the reaction octanoyl-[ACP] + L-lysyl-[protein] = N(6)-octanoyl-L-lysyl-[protein] + holo-[ACP] + H(+). It functions in the pathway protein modification; protein lipoylation via endogenous pathway; protein N(6)-(lipoyl)lysine from octanoyl-[acyl-carrier-protein]: step 1/2. Catalyzes the transfer of endogenously produced octanoic acid from octanoyl-acyl-carrier-protein onto the lipoyl domains of lipoate-dependent enzymes. Lipoyl-ACP can also act as a substrate although octanoyl-ACP is likely to be the physiological substrate. The chain is Octanoyltransferase from Psychrobacter arcticus (strain DSM 17307 / VKM B-2377 / 273-4).